The chain runs to 206 residues: Large ribosomal subunit protein uL4 (206 aa).

Residues 47–77 are disordered; the sequence is TRAQKGRSDVTGSTRKQWRQKGTGRARTGAA.

It belongs to the universal ribosomal protein uL4 family. In terms of assembly, part of the 50S ribosomal subunit.

Functionally, one of the primary rRNA binding proteins, this protein initially binds near the 5'-end of the 23S rRNA. It is important during the early stages of 50S assembly. It makes multiple contacts with different domains of the 23S rRNA in the assembled 50S subunit and ribosome. Its function is as follows. Forms part of the polypeptide exit tunnel. The chain is Large ribosomal subunit protein uL4 from Nitrosomonas europaea (strain ATCC 19718 / CIP 103999 / KCTC 2705 / NBRC 14298).